Reading from the N-terminus, the 657-residue chain is MAPGLDLIWMVISFLLLIHLSSQQETGFSFNGFRQGDLHVDGVAQILPGGLLRLTDTSEQKKGHAFFRQPLVFNSSEPLSFSTHFVCAMVRKPGVTGGNGIAFFLSPSMDLTNADATQYLGLFNTTTNRSPSSHIFAIELDTVQSAEFDDIDNNHVGIDVNSLTSVESAPASYFSDKKGLNKSISLLSGDSIQVWVDFDGTVLNVSLAPLGIRKPSQSLISRSMNLSEVIQDRMFVGFSAATGQLANNHYILGWSFSRSKASLQSLDISKLPQVPHPKMKTSLLLILLLIVLGIILLVLLVGAYLYRRNKYAEVREEWEKEYGPHRYSYKSLYKATKGFHKDGFLGKGGFGEVYKGTLPQEDIAVKRFSHHGERGMKQFVAEIASMGCLDHRNLVPLFGYCRRKGEFLLVSKYMPNGSLDQFLFHNREPSLTWSKRLGILKGIASALKYLHTEATQVVLHRDIKASNVMLDTDFTGKLGDFGMARFHDHGANPTTTGAVGTVGYMGPELTSMGASTKTDVYAFGALILEVTCGRRPVEPNLPIEKQLLVKWVCDCWKRKDLISARDPKLSGELIPQIEMVLKLGLLCTNLVPESRPDMVKVVQYLDRQVSLPDFSPDSPGIGIVTPVLVGGSSTVISNISSPVTEFITHSIQYGIGR.

An N-terminal signal peptide occupies residues 1 to 23 (MAPGLDLIWMVISFLLLIHLSSQ). Over 24–282 (QETGFSFNGF…QVPHPKMKTS (259 aa)) the chain is Extracellular. Residues 25–257 (ETGFSFNGFR…NHYILGWSFS (233 aa)) are legume-lectin like. Asn-74, Asn-124, Asn-181, Asn-204, and Asn-225 each carry an N-linked (GlcNAc...) asparagine glycan. A helical membrane pass occupies residues 283–303 (LLLILLLIVLGIILLVLLVGA). Residues 304 to 657 (YLYRRNKYAE…THSIQYGIGR (354 aa)) lie on the Cytoplasmic side of the membrane. In terms of domain architecture, Protein kinase spans 339–611 (FHKDGFLGKG…VQYLDRQVSL (273 aa)). Residues 345–353 (LGKGGFGEV) and Lys-366 each bind ATP. Asp-462 (proton acceptor) is an active-site residue.

In the C-terminal section; belongs to the protein kinase superfamily. Ser/Thr protein kinase family. The protein in the N-terminal section; belongs to the leguminous lectin family.

The protein localises to the cell membrane. The catalysed reaction is L-seryl-[protein] + ATP = O-phospho-L-seryl-[protein] + ADP + H(+). It catalyses the reaction L-threonyl-[protein] + ATP = O-phospho-L-threonyl-[protein] + ADP + H(+). Functionally, involved in resistance response to the pathogenic fungus Alternaria brassicicola. This is L-type lectin-domain containing receptor kinase I.8 from Arabidopsis thaliana (Mouse-ear cress).